We begin with the raw amino-acid sequence, 122 residues long: Large ribosomal subunit protein uL14 (122 aa).

It belongs to the universal ribosomal protein uL14 family. Part of the 50S ribosomal subunit. Forms a cluster with proteins L3 and L19. In the 70S ribosome, L14 and L19 interact and together make contacts with the 16S rRNA in bridges B5 and B8.

Binds to 23S rRNA. Forms part of two intersubunit bridges in the 70S ribosome. The sequence is that of Large ribosomal subunit protein uL14 from Neisseria meningitidis serogroup C (strain 053442).